Consider the following 202-residue polypeptide: Remorin 1.4 (202 aa).

Basic and acidic residues predominate over residues 1 to 10 (MAEEEPKKVT). The disordered stretch occupies residues 1–79 (MAEEEPKKVT…VEEEKKEGSV (79 aa)). Over residues 25–39 (EKPAAAADVAPQEKP) the composition is skewed to low complexity. Residues 40-50 (VAPPPVLPSPA) are compositionally biased toward pro residues. The span at 68–79 (KEVEEEKKEGSV) shows a compositional bias: basic and acidic residues. Residues 123–169 (ENNKKAAVEAELKKMEEQLEKKKAEYVEQMKNKIAQIHKEAEEKRAM) adopt a coiled-coil conformation.

It belongs to the remorin family.

The chain is Remorin 1.4 from Arabidopsis thaliana (Mouse-ear cress).